The sequence spans 504 residues: Ribonuclease Y (504 aa).

A helical transmembrane segment spans residues 2-22 (TTSIVIGVVLVTVGLTFGWTI). Positions 194-279 (TVSTVNLPSE…EIVQKVTQEV (86 aa)) constitute a KH domain. An HD domain is found at 320-413 (VLYHSKEVAL…VQVADAISAA (94 aa)).

The protein belongs to the RNase Y family.

The protein resides in the cell membrane. In terms of biological role, endoribonuclease that initiates mRNA decay. The chain is Ribonuclease Y from Treponema pallidum (strain Nichols).